We begin with the raw amino-acid sequence, 304 residues long: Oxygen-dependent coproporphyrinogen-III oxidase (304 aa).

Serine 93 serves as a coordination point for substrate. A divalent metal cation contacts are provided by histidine 97 and histidine 107. Histidine 107 serves as the catalytic Proton donor. 109 to 111 (NVR) contributes to the substrate binding site. Histidine 146 and histidine 176 together coordinate a divalent metal cation. Residues 241–276 (YVEFNLVYDRGTLFGLQSGGRTESILMSLPPQVRWG) form an important for dimerization region. A substrate-binding site is contributed by 259-261 (GGR).

Belongs to the aerobic coproporphyrinogen-III oxidase family. As to quaternary structure, homodimer. It depends on a divalent metal cation as a cofactor.

The protein localises to the cytoplasm. The enzyme catalyses coproporphyrinogen III + O2 + 2 H(+) = protoporphyrinogen IX + 2 CO2 + 2 H2O. Its pathway is porphyrin-containing compound metabolism; protoporphyrin-IX biosynthesis; protoporphyrinogen-IX from coproporphyrinogen-III (O2 route): step 1/1. Involved in the heme biosynthesis. Catalyzes the aerobic oxidative decarboxylation of propionate groups of rings A and B of coproporphyrinogen-III to yield the vinyl groups in protoporphyrinogen-IX. The chain is Oxygen-dependent coproporphyrinogen-III oxidase from Pseudomonas syringae pv. tomato (strain ATCC BAA-871 / DC3000).